A 244-amino-acid polypeptide reads, in one-letter code: Lactate utilization protein A (244 aa).

It belongs to the LutA/YkgE family.

Is involved in L-lactate degradation and allows cells to grow with lactate as the sole carbon source. The sequence is that of Lactate utilization protein A from Oceanobacillus iheyensis (strain DSM 14371 / CIP 107618 / JCM 11309 / KCTC 3954 / HTE831).